A 104-amino-acid polypeptide reads, in one-letter code: Glycine-rich protein (104 aa).

The first 18 residues, 1–18, serve as a signal peptide directing secretion; the sequence is MKSMIAAILFALVATSLA.

The protein belongs to the non-disulfide-bridged peptide (NDBP) superfamily. As to expression, expressed by the venom gland.

The protein resides in the secreted. In Lychas mucronatus (Chinese swimming scorpion), this protein is Glycine-rich protein.